Reading from the N-terminus, the 517-residue chain is Membrane-bound lytic murein transglycosylase F (517 aa).

The N-terminal stretch at 1–32 is a signal peptide; it reads MKKFKINYLLIGIVTLLLAAALWPSIPWFGKA. A non-LT domain region spans residues 33-269; that stretch reads ENRIAAIQSR…RLEEKYLGHG (237 aa). Residues 270 to 517 form an LT domain region; it reads GDFDYVDTRS…PNTLVQAPRR (248 aa). Residue glutamate 314 is part of the active site.

This sequence in the N-terminal section; belongs to the bacterial solute-binding protein 3 family. In the C-terminal section; belongs to the transglycosylase Slt family.

It localises to the cell outer membrane. The enzyme catalyses Exolytic cleavage of the (1-&gt;4)-beta-glycosidic linkage between N-acetylmuramic acid (MurNAc) and N-acetylglucosamine (GlcNAc) residues in peptidoglycan, from either the reducing or the non-reducing ends of the peptidoglycan chains, with concomitant formation of a 1,6-anhydrobond in the MurNAc residue.. Its function is as follows. Murein-degrading enzyme that degrades murein glycan strands and insoluble, high-molecular weight murein sacculi, with the concomitant formation of a 1,6-anhydromuramoyl product. Lytic transglycosylases (LTs) play an integral role in the metabolism of the peptidoglycan (PG) sacculus. Their lytic action creates space within the PG sacculus to allow for its expansion as well as for the insertion of various structures such as secretion systems and flagella. The protein is Membrane-bound lytic murein transglycosylase F of Enterobacter sp. (strain 638).